Reading from the N-terminus, the 149-residue chain is MHFLAAAFLLLTLSASALAEPVHFRDCGSGVGVIKEVNVNPCPTQPCQLHKGQSYSVNVTFTSNTQSKGSKAVVHGIVMGVPIPFPIPDPDGCKSGINCPIQKDQTYSYLNKLPVKAEYPSIKLVVEWKLQDDNDQCLFCWQIPVQIES.

Positions 1 to 19 (MHFLAAAFLLLTLSASALA) are cleaved as a signal peptide. 3 disulfide bridges follow: Cys-27–Cys-140, Cys-42–Cys-47, and Cys-93–Cys-99. Residue Asn-58 is glycosylated (N-linked (GlcNAc...) asparagine). An N6-acetyllysine modification is found at Lys-116.

It belongs to the NPC2 family. In terms of assembly, interacts with NPC1 (via the second lumenal domain) in a cholestrol-dependent manner. Interacts with NUS1/NgBR, the interaction stabilizes NCP2 and regulates cholesterol trafficking. Interacts with DHDDS. Interacts with NEDD4L (via C2 domain). Interacts with NPC1L1. Post-translationally, N-glycosylated. Found in the epididymal fluid as a 19 kDa glycoprotein that is processed during its passage through the epididymis into a 16 kDa protein. In terms of tissue distribution, found in the fluid from the distal caput to cauda epididymis, not detected in the rete testis and the proximal and middle caput epididymal fluids (at protein level).

Its subcellular location is the secreted. The protein localises to the endoplasmic reticulum. The protein resides in the lysosome. It carries out the reaction cholesterol(in) = cholesterol(out). Its function is as follows. Intracellular cholesterol transporter which acts in concert with NPC1 and plays an important role in the egress of cholesterol from the lysosomal compartment. Unesterified cholesterol that has been released from LDLs in the lumen of the late endosomes/lysosomes is transferred by NPC2 to the cholesterol-binding pocket in the N-terminal domain of NPC1. May bind and mobilize cholesterol that is associated with membranes. NPC2 binds cholesterol with a 1:1 stoichiometry. Can bind a variety of sterols, including lathosterol, desmosterol and the plant sterols stigmasterol and beta-sitosterol. The secreted form of NCP2 regulates biliary cholesterol secretion via stimulation of ABCG5/ABCG8-mediated cholesterol transport. The protein is NPC intracellular cholesterol transporter 2 of Sus scrofa (Pig).